We begin with the raw amino-acid sequence, 569 residues long: CTP synthase (569 aa).

A Glutamine amidotransferase type-1 domain is found at 313-569 (RIAMVGKYTG…NASLERLKKM (257 aa)). The Nucleophile role is filled by Cys-410. Active-site residues include His-541 and Glu-543.

This sequence belongs to the CTP synthase family.

It catalyses the reaction UTP + L-glutamine + ATP + H2O = CTP + L-glutamate + ADP + phosphate + 2 H(+). Its pathway is pyrimidine metabolism; CTP biosynthesis via de novo pathway; CTP from UDP: step 2/2. In terms of biological role, catalyzes the ATP-dependent amination of UTP to CTP with either L-glutamine or ammonia as the source of nitrogen. The sequence is that of CTP synthase (ctps) from Dictyostelium discoideum (Social amoeba).